The following is a 1112-amino-acid chain: DNA polymerase II large subunit (1112 aa).

This sequence belongs to the archaeal DNA polymerase II family. As to quaternary structure, heterodimer of a large subunit and a small subunit.

It catalyses the reaction DNA(n) + a 2'-deoxyribonucleoside 5'-triphosphate = DNA(n+1) + diphosphate. The catalysed reaction is Exonucleolytic cleavage in the 3'- to 5'-direction to yield nucleoside 5'-phosphates.. Its function is as follows. Possesses two activities: a DNA synthesis (polymerase) and an exonucleolytic activity that degrades single-stranded DNA in the 3'- to 5'-direction. Has a template-primer preference which is characteristic of a replicative DNA polymerase. The protein is DNA polymerase II large subunit of Cenarchaeum symbiosum (strain A).